Here is a 137-residue protein sequence, read N- to C-terminus: ER-derived vesicles protein erv14 (137 aa).

Residues 1–9 are Cytoplasmic-facing; the sequence is MMSFGSFVY. The chain crosses the membrane as a helical span at residues 10–30; sequence IACLLLNGANMLLQIFCVIMF. Over 31-62 the chain is Extracellular; it reads SDLEMDYINPIDLCNKLNDLVMPEIISHTLVT. Residues 63-83 form a helical membrane-spanning segment; sequence LLLLLGKKWLLFLANLPLLVF. Residues 84-114 are Cytoplasmic-facing; the sequence is HANQVIHKTHILDATEIFRQLGRHKRDNFIK. Residues 115–135 traverse the membrane as a helical segment; the sequence is VTFYLIMFFTLLYCMVMSLIQ. The Extracellular portion of the chain corresponds to 136–137; sequence EE.

It belongs to the cornichon family.

It is found in the endoplasmic reticulum. It localises to the membrane. The protein localises to the golgi apparatus membrane. Its function is as follows. Regulates export of the secretory proteins from the endoplasmic reticulum in COPII-coated vesicles. In Schizosaccharomyces pombe (strain 972 / ATCC 24843) (Fission yeast), this protein is ER-derived vesicles protein erv14 (erv14).